A 342-amino-acid polypeptide reads, in one-letter code: Trans-enoyl reductase himH (342 aa).

46 to 49 (TDWK) is an NADP(+) binding site. Position 133–140 (133–140 (LSVSTAAS)) interacts with substrate. NADP(+) is bound by residues 168 to 171 (SSSV), 191 to 194 (SQAN), 255 to 256 (VM), and 329 to 330 (VS).

The protein belongs to the zinc-containing alcohol dehydrogenase family. In terms of assembly, monomer.

It participates in secondary metabolite biosynthesis. Trans-enoyl reductase; part of the him gene cluster that mediates the biosynthesis of himeic acid A, a ubiquitin-activating enzyme (E1) inhibitor. First, himA, together with the trans-enoyl reductase himH, catalyzes the formation of apolyketide chain, which is then condensed with leucine by the NRPS activity of himA. Dieckmann cyclization and release from himA gives a tetramic acid intermediate as the product of himA PKS-NRPS. HimG then catalyzes alpha-oxidation of the tetramic acid ring, with a subsequent rearrangement to yield apyrone intermediate. Two terminal methyl groups of polyketide and amide side chains are oxidized to carboxylic acids by himC cytochrome P450 monooxygenase to form himeic acid A. Himeic acid A is further converted to himeic acid B and C during culture growth. No gene responsible for pyrone to pyridone conversion was found in the him gene cluster and himeic acid A is non-enzymatically converted to himeic acid C by the incorporation of an ammonium nitrogen atom in a pH5 buffer, and to himeic acid B at a conversion ratio of 50% during incubation in MeOH for 5 days. The sequence is that of Trans-enoyl reductase himH from Aspergillus japonicus.